Here is a 180-residue protein sequence, read N- to C-terminus: Large ribosomal subunit protein uL5 (180 aa).

It belongs to the universal ribosomal protein uL5 family. Part of the 50S ribosomal subunit; part of the 5S rRNA/L5/L18/L25 subcomplex. Contacts the 5S rRNA and the P site tRNA. Forms a bridge to the 30S subunit in the 70S ribosome.

In terms of biological role, this is one of the proteins that bind and probably mediate the attachment of the 5S RNA into the large ribosomal subunit, where it forms part of the central protuberance. In the 70S ribosome it contacts protein S13 of the 30S subunit (bridge B1b), connecting the 2 subunits; this bridge is implicated in subunit movement. Contacts the P site tRNA; the 5S rRNA and some of its associated proteins might help stabilize positioning of ribosome-bound tRNAs. The chain is Large ribosomal subunit protein uL5 from Streptococcus pyogenes serotype M49 (strain NZ131).